The sequence spans 530 residues: Retinoic acid-induced protein 2 (530 aa).

Polar residues predominate over residues 1–13 (MDDLQSQNLSMDM). The interval 1–22 (MDDLQSQNLSMDMTDSPPALAN) is disordered.

This Homo sapiens (Human) protein is Retinoic acid-induced protein 2 (RAI2).